The chain runs to 318 residues: tRNA-modifying protein YgfZ (318 aa).

Residues W28 and W182 each contribute to the folate site.

This sequence belongs to the tRNA-modifying YgfZ family.

Its subcellular location is the cytoplasm. In terms of biological role, folate-binding protein involved in regulating the level of ATP-DnaA and in the modification of some tRNAs. It is probably a key factor in regulatory networks that act via tRNA modification, such as initiation of chromosomal replication. In Aliivibrio fischeri (strain MJ11) (Vibrio fischeri), this protein is tRNA-modifying protein YgfZ.